The following is a 354-amino-acid chain: Methionine import ATP-binding protein MetN (354 aa).

An ABC transporter domain is found at 8 to 250 (LDHIDITFHQ…PREDLTKDFI (243 aa)). Position 42–49 (42–49 (GYSGAGKS)) interacts with ATP.

Belongs to the ABC transporter superfamily. Methionine importer (TC 3.A.1.24) family. The complex is composed of two ATP-binding proteins (MetN), two transmembrane proteins (MetI) and a solute-binding protein (MetQ).

Its subcellular location is the cell membrane. The enzyme catalyses L-methionine(out) + ATP + H2O = L-methionine(in) + ADP + phosphate + H(+). The catalysed reaction is D-methionine(out) + ATP + H2O = D-methionine(in) + ADP + phosphate + H(+). Its function is as follows. Part of the ABC transporter complex MetNIQ involved in methionine import. Responsible for energy coupling to the transport system. The chain is Methionine import ATP-binding protein MetN from Streptococcus mutans serotype c (strain ATCC 700610 / UA159).